A 443-amino-acid polypeptide reads, in one-letter code: MSTTPATPKVGFVSLGCPKALVDSERILTQLRMEGYEVVPTYEDADVVVVNTCGFIDSAKAESLEVIGEAIKENGKVIVTGCMGVEEGSIRDVHPSVLSVTGPQQYEQVVNAVHEVVPPRQDHNPLIDLVPPQGVKLTPRHYAYLKISEGCNHSCSFCIIPSMRGKLVSRPVGEVLSEAERLVKAGVKEILVISQDTSAYGVDVKYKTDFWNGRPVKTRMLELCEALSSLGAWVRLHYVYPYPNVDDVIPLMAAGKILPYLDIPFQHASPKVLKSMKRPAFEDRTLARIKNWREQCPELVIRSTFIVGFPGETEEDFQYLLDWLTEAQLDRVGCFQYSPVEGAPANDLGLEEVPDDVKQERWDRFMAHQQAISSARLQLRIGKEIEVLIDEVEEQGSVGRSFFDAPEIDGSVFIDGDHGLKPGDKVRCRVVDADEYDMWAEPV.

The MTTase N-terminal domain occupies 8-118; the sequence is PKVGFVSLGC…VVNAVHEVVP (111 aa). [4Fe-4S] cluster contacts are provided by cysteine 17, cysteine 53, cysteine 82, cysteine 151, cysteine 155, and cysteine 158. Residues 137–376 enclose the Radical SAM core domain; the sequence is LTPRHYAYLK…AHQQAISSAR (240 aa). The region spanning 378 to 443 is the TRAM domain; it reads QLRIGKEIEV…DEYDMWAEPV (66 aa).

The protein belongs to the methylthiotransferase family. RimO subfamily. [4Fe-4S] cluster is required as a cofactor.

The protein localises to the cytoplasm. It catalyses the reaction L-aspartate(89)-[ribosomal protein uS12]-hydrogen + (sulfur carrier)-SH + AH2 + 2 S-adenosyl-L-methionine = 3-methylsulfanyl-L-aspartate(89)-[ribosomal protein uS12]-hydrogen + (sulfur carrier)-H + 5'-deoxyadenosine + L-methionine + A + S-adenosyl-L-homocysteine + 2 H(+). In terms of biological role, catalyzes the methylthiolation of an aspartic acid residue of ribosomal protein uS12. The chain is Ribosomal protein uS12 methylthiotransferase RimO from Pseudomonas putida (strain W619).